The following is a 377-amino-acid chain: Deoxyribonuclease CdiA-o11 (377 aa).

The VENN CT cleavage motif signature appears at 81-84 (VENN). Residues 85 to 233 (YLSTNQSLTF…ISFMSRNTAT (149 aa)) are inner membrane translocation domain (IMTD), targets to YciB. The tract at residues 88-377 (TNQSLTFDKE…GVKVTVTQVK (290 aa)) is CT domain, sufficient to interact with CdiI. The tract at residues 222–377 (AAISFMSRNT…GVKVTVTQVK (156 aa)) is has DNase activity in vivo, cannot be expressed in the absence of CdiI. Active-site residues include Glu-257, Asp-278, Ser-289, and Lys-291. Zn(2+) contacts are provided by Glu-257 and Asp-278.

Interacts with cognate immunity protein CdiI-o11-EC869, which blocks its toxic DNase activity. Zn(2+) is required as a cofactor.

The protein resides in the target cell. It localises to the target cell cytoplasm. Its function is as follows. Toxic component of a toxin-immunity protein module, which functions as a cellular contact-dependent growth inhibition (CDI) system. CDI modules allow bacteria to communicate with and inhibit the growth of closely related neighboring bacteria in a contact-dependent fashion. The C-terminal 289 residues (the CT fragment) has a strong DNase activity in the presence of Zn(2+), completely degrading supercoiled and linear plasmids, and inhibits growth. In the presence of Mg(2+) it nicks dsDNA. Toxic activity is neutralized by coexpression of the cognate immunity protein CdiI-o11-EC869, but not by non-cognate immunity proteins from other toxin-immunity modules or other strains of E.coli. Gains access to the cytoplasm of target cells by using integral inner membrane protein YciB. In terms of biological role, expression of this locus confers protection against other bacteria carrying the locus. The polypeptide is Deoxyribonuclease CdiA-o11 (cdiA4) (Escherichia coli O157:H7 (strain EC869)).